The sequence spans 215 residues: UPF0502 protein YceH (215 aa).

The protein belongs to the UPF0502 family.

This chain is UPF0502 protein YceH, found in Salmonella heidelberg (strain SL476).